The sequence spans 86 residues: Triosephosphate isomerase (86 aa).

The Proton acceptor role is filled by E62.

This sequence belongs to the triosephosphate isomerase family. As to quaternary structure, homodimer.

It catalyses the reaction D-glyceraldehyde 3-phosphate = dihydroxyacetone phosphate. Its pathway is carbohydrate biosynthesis; gluconeogenesis. It functions in the pathway carbohydrate degradation; glycolysis; D-glyceraldehyde 3-phosphate from glycerone phosphate: step 1/1. This Platanus orientalis (Oriental plane-tree) protein is Triosephosphate isomerase.